We begin with the raw amino-acid sequence, 263 residues long: Phosphatidylglycerol--prolipoprotein diacylglyceryl transferase (263 aa).

A run of 4 helical transmembrane segments spans residues 6 to 26 (VIFS…VLGI), 50 to 70 (LLTA…VLIY), 85 to 105 (TWEG…AVII), and 112 to 132 (IPIF…LLLG). An a 1,2-diacyl-sn-glycero-3-phospho-(1'-sn-glycerol)-binding site is contributed by Arg-133. The next 3 helical transmembrane spans lie at 169–189 (LYEA…LFYL), 197–217 (GATT…VEFF), and 233–253 (MGQL…LGAL).

It belongs to the Lgt family.

It is found in the cell membrane. The enzyme catalyses L-cysteinyl-[prolipoprotein] + a 1,2-diacyl-sn-glycero-3-phospho-(1'-sn-glycerol) = an S-1,2-diacyl-sn-glyceryl-L-cysteinyl-[prolipoprotein] + sn-glycerol 1-phosphate + H(+). It participates in protein modification; lipoprotein biosynthesis (diacylglyceryl transfer). Functionally, catalyzes the transfer of the diacylglyceryl group from phosphatidylglycerol to the sulfhydryl group of the N-terminal cysteine of a prolipoprotein, the first step in the formation of mature lipoproteins. In Wolbachia pipientis subsp. Culex pipiens (strain wPip), this protein is Phosphatidylglycerol--prolipoprotein diacylglyceryl transferase.